Reading from the N-terminus, the 177-residue chain is Probable DNA-directed RNA polymerase subunit delta (177 aa).

The HTH HARE-type domain maps to 14 to 81 (CSMIEVVHSV…GENRWGLRSW (68 aa)). The interval 93–177 (PQPKPKKKRK…ETEEEEEEEL (85 aa)) is disordered. Acidic residues predominate over residues 106 to 177 (DGFDDYIEED…ETEEEEEEEL (72 aa)).

Belongs to the RpoE family. In terms of assembly, RNAP is composed of a core of 2 alpha, a beta and a beta' subunits. The core is associated with a delta subunit and one of several sigma factors.

Participates in both the initiation and recycling phases of transcription. In the presence of the delta subunit, RNAP displays an increased specificity of transcription, a decreased affinity for nucleic acids, and an increased efficiency of RNA synthesis because of enhanced recycling. The polypeptide is Probable DNA-directed RNA polymerase subunit delta (Bacillus cereus (strain AH187)).